A 273-amino-acid polypeptide reads, in one-letter code: Imidazole glycerol phosphate synthase subunit HisF (273 aa).

Active-site residues include D11 and D134.

This sequence belongs to the HisA/HisF family. In terms of assembly, heterodimer of HisH and HisF.

The protein resides in the cytoplasm. It catalyses the reaction 5-[(5-phospho-1-deoxy-D-ribulos-1-ylimino)methylamino]-1-(5-phospho-beta-D-ribosyl)imidazole-4-carboxamide + L-glutamine = D-erythro-1-(imidazol-4-yl)glycerol 3-phosphate + 5-amino-1-(5-phospho-beta-D-ribosyl)imidazole-4-carboxamide + L-glutamate + H(+). Its pathway is amino-acid biosynthesis; L-histidine biosynthesis; L-histidine from 5-phospho-alpha-D-ribose 1-diphosphate: step 5/9. IGPS catalyzes the conversion of PRFAR and glutamine to IGP, AICAR and glutamate. The HisF subunit catalyzes the cyclization activity that produces IGP and AICAR from PRFAR using the ammonia provided by the HisH subunit. The sequence is that of Imidazole glycerol phosphate synthase subunit HisF from Methanosarcina mazei (strain ATCC BAA-159 / DSM 3647 / Goe1 / Go1 / JCM 11833 / OCM 88) (Methanosarcina frisia).